The chain runs to 240 residues: Ribosomal RNA large subunit methyltransferase E (240 aa).

Gly residues predominate over residues M1–G20. A disordered region spans residues M1–G33. S-adenosyl-L-methionine contacts are provided by G92, W94, D115, D131, and D155. K195 acts as the Proton acceptor in catalysis.

This sequence belongs to the class I-like SAM-binding methyltransferase superfamily. RNA methyltransferase RlmE family.

The protein resides in the cytoplasm. The catalysed reaction is uridine(2552) in 23S rRNA + S-adenosyl-L-methionine = 2'-O-methyluridine(2552) in 23S rRNA + S-adenosyl-L-homocysteine + H(+). Functionally, specifically methylates the uridine in position 2552 of 23S rRNA at the 2'-O position of the ribose in the fully assembled 50S ribosomal subunit. The chain is Ribosomal RNA large subunit methyltransferase E from Brucella abortus (strain S19).